We begin with the raw amino-acid sequence, 403 residues long: Glucose-signaling factor 2 (403 aa).

The Lumenal portion of the chain corresponds to 1-177 (MEIYIRLNAD…QEVQANYSSL (177 aa)). 2 N-linked (GlcNAc...) asparagine glycosylation sites follow: asparagine 89 and asparagine 173. Residues 178–198 (VAQWLFFVMHIFKVGIITLFL) form a helical; Signal-anchor for type II membrane protein membrane-spanning segment. The Cytoplasmic portion of the chain corresponds to 199–403 (KLGIANPISF…IKKNDLKKSN (205 aa)). Residues 330–388 (ELENNLKKILEEYDGDIGKMNAEIRRFRRFGIYEPDEKLASLVKLRREIADEKEKASNN) are a coiled coil.

Its subcellular location is the endoplasmic reticulum membrane. Functionally, may be involved in the secretion of hexose transporters from the endoplasmic reticulum. Involved in secretion of GAL2 and HXT1. In Saccharomyces cerevisiae (strain ATCC 204508 / S288c) (Baker's yeast), this protein is Glucose-signaling factor 2 (GSF2).